A 249-amino-acid chain; its full sequence is Pleckstrin homology domain-containing family F member 2 (249 aa).

Ser-16 carries the post-translational modification Phosphoserine. Residues 35-131 (VLIGEGVLTK…WMNHINKCVT (97 aa)) form the PH domain. N6-acetyllysine is present on Lys-44. Residues 152-212 (DSEATVCMRC…ICDFCYDLLS (61 aa)) form an FYVE-type zinc finger. Positions 158, 161, 175, 178, 183, 186, 204, and 207 each coordinate Zn(2+). The span at 221–233 (PTRSDSYSQSLKS) shows a compositional bias: polar residues. Positions 221–249 (PTRSDSYSQSLKSPLNDASDDDDDDDSSD) are disordered. The span at 238–249 (ASDDDDDDDSSD) shows a compositional bias: acidic residues. Phosphoserine is present on residues Ser-239 and Ser-248.

In terms of assembly, may interact with EEA1. In terms of tissue distribution, expressed in brain, stomach and thymus, as well as in kidney, spleen, and skeletal muscle. Also expressed in peripheral blood mononuclear cells and dendritic cells.

It is found in the early endosome membrane. The protein localises to the endoplasmic reticulum. In terms of biological role, may play a role in early endosome fusion upstream of RAB5, hence regulating receptor trafficking and fluid-phase transport. Enhances cellular sensitivity to TNF-induced apoptosis. In Mus musculus (Mouse), this protein is Pleckstrin homology domain-containing family F member 2 (Plekhf2).